The sequence spans 76 residues: Histone acetyltransferase (76 aa).

As to quaternary structure, physically interacts with histone H3 in infected macrophages.

It localises to the secreted. The protein resides in the host cytoplasm. Its subcellular location is the host nucleus. It catalyses the reaction L-lysyl-[protein] + acetyl-CoA = N(6)-acetyl-L-lysyl-[protein] + CoA + H(+). Its activity is regulated as follows. Is completely inhibited by anacardic acid, an inhibitor of HAT activity. Functionally, histone acetyltransferase, which by binding to the host chromatin, may manipulate the expression of host genes involved in anti-inflammatory responses to evade clearance and to survive in the intracellular milieu. Acetylates histone H3 at the 'Lys-9' and 'Lys-14' positions. The sequence is that of Histone acetyltransferase from Mycobacterium tuberculosis (strain CDC 1551 / Oshkosh).